The following is a 496-amino-acid chain: tRNA-2-methylthio-N(6)-dimethylallyladenosine synthase (496 aa).

One can recognise an MTTase N-terminal domain in the interval 10–126; the sequence is RTYEVRTYGC…LPALLERARV (117 aa). [4Fe-4S] cluster contacts are provided by Cys19, Cys55, Cys89, Cys163, Cys167, and Cys170. The Radical SAM core domain occupies 149-380; sequence RESAYAAWVS…ALVNEIAWEE (232 aa). The TRAM domain maps to 382 to 451; that stretch reads KRLVGRRVEL…PHHLVADGPV (70 aa). The disordered stretch occupies residues 465 to 496; that stretch reads ARNAAPAPSSGVTLGMPTVGAPAPLPDAPACR. Over residues 487–496 the composition is skewed to pro residues; it reads APLPDAPACR.

The protein belongs to the methylthiotransferase family. MiaB subfamily. In terms of assembly, monomer. [4Fe-4S] cluster serves as cofactor.

The protein localises to the cytoplasm. It carries out the reaction N(6)-dimethylallyladenosine(37) in tRNA + (sulfur carrier)-SH + AH2 + 2 S-adenosyl-L-methionine = 2-methylsulfanyl-N(6)-dimethylallyladenosine(37) in tRNA + (sulfur carrier)-H + 5'-deoxyadenosine + L-methionine + A + S-adenosyl-L-homocysteine + 2 H(+). Its function is as follows. Catalyzes the methylthiolation of N6-(dimethylallyl)adenosine (i(6)A), leading to the formation of 2-methylthio-N6-(dimethylallyl)adenosine (ms(2)i(6)A) at position 37 in tRNAs that read codons beginning with uridine. The protein is tRNA-2-methylthio-N(6)-dimethylallyladenosine synthase of Nocardioides sp. (strain ATCC BAA-499 / JS614).